The sequence spans 269 residues: MTTAPFLFPSLSRLHSARASSFPKPPVGSGAGVAFPARPYGSSLRLRSSVMAATGVGGNGSPMAPEESTVSSRLGEVKRVTKETNVHVKINLDGTGVANSSTGIPFLDHMLDQLASHGLFDVYVKATGDTHIDDHHSNEDIALAIGTALLQALGDRKGINRFGHFTAPLDEAAVEVILDLSGRPHLSCGLSIPTERVGTYDTQLVEHFFQSLVNTSGMTLHIRQLAGNNSHHIIEATFKAFARALRQATEYDLRRQGTIPSSKGVLSRS.

Residues 1 to 51 (MTTAPFLFPSLSRLHSARASSFPKPPVGSGAGVAFPARPYGSSLRLRSSVM) constitute a chloroplast transit peptide. Substrate is bound by residues E83, 109–117 (HMLDQLASH), 135–139 (HHSNE), R161, and R183. Residues H109, H135, H136, and E139 each contribute to the Mn(2+) site. Positions 207, 231, 232, and 235 each coordinate Mn(2+). Substrate is bound by residues 231–239 (HHIIEATFK) and 261–263 (SSK).

Belongs to the imidazoleglycerol-phosphate dehydratase family. It depends on Mn(2+) as a cofactor.

The protein localises to the plastid. Its subcellular location is the chloroplast. It catalyses the reaction D-erythro-1-(imidazol-4-yl)glycerol 3-phosphate = 3-(imidazol-4-yl)-2-oxopropyl phosphate + H2O. It functions in the pathway amino-acid biosynthesis; L-histidine biosynthesis; L-histidine from 5-phospho-alpha-D-ribose 1-diphosphate: step 6/9. The sequence is that of Imidazoleglycerol-phosphate dehydratase 2, chloroplastic from Triticum aestivum (Wheat).